The sequence spans 180 residues: Transcription factor IBH1-like 1 (180 aa).

In terms of domain architecture, bHLH spans 110–160; the sequence is KSKSASEEAAAKAKRLVKRRTQGLRNVVPGGELMSNDVLLLQETLDYIVSL.

This sequence belongs to the bHLH protein family.

The protein resides in the nucleus. In terms of biological role, functions redundandly with IBH1/BHLH158 in a regulation node known as the incoherent feed-forward loop (FFL). Acts as transcriptional repressor that negatively regulates cell and organ elongation in response to gibberellin (GA) and brassinosteroid (BR) signaling. This chain is Transcription factor IBH1-like 1, found in Arabidopsis thaliana (Mouse-ear cress).